The sequence spans 135 residues: uncharacterized protein (135 aa).

The segment at 1–36 (MSHAEKPMSDSVNHHHHRTFEVLTAEPVRSRRKPRH) is disordered.

The protein belongs to the transposase 8 family.

This is an uncharacterized protein from Sinorhizobium fredii (strain NBRC 101917 / NGR234).